The primary structure comprises 450 residues: FERM domain-containing protein 8 (450 aa).

Positions 28-373 (MDVIVYLIND…YCIELSQTTE (346 aa)) constitute an FERM domain.

The protein resides in the cytoplasm. It is found in the cytosol. Its subcellular location is the cell membrane. In terms of biological role, promotes the cell surface stability of RHBDF1 and RHBDF2 and prevents their degradation via the endolysosomal pathway. By acting on RHBDF proteins, involved in ADAM17-mediated ligand shedding. May negatively regulate Wnt signaling. The sequence is that of FERM domain-containing protein 8 (frmd8) from Xenopus tropicalis (Western clawed frog).